A 193-amino-acid polypeptide reads, in one-letter code: Flagellar transcriptional regulator FlhC (193 aa).

Positions 138, 141, 158, and 161 each coordinate Zn(2+).

This sequence belongs to the FlhC family. As to quaternary structure, heterohexamer composed of two FlhC and four FlhD subunits. Each FlhC binds a FlhD dimer, forming a heterotrimer, and a hexamer assembles by dimerization of two heterotrimers. Zn(2+) is required as a cofactor.

The protein resides in the cytoplasm. In terms of biological role, functions in complex with FlhD as a master transcriptional regulator that regulates transcription of several flagellar and non-flagellar operons by binding to their promoter region. Activates expression of class 2 flagellar genes, including fliA, which is a flagellum-specific sigma factor that turns on the class 3 genes. Also regulates genes whose products function in a variety of physiological pathways. This is Flagellar transcriptional regulator FlhC from Yersinia enterocolitica.